The primary structure comprises 254 residues: Pimeloyl-[acyl-carrier protein] methyl ester esterase (254 aa).

The 227-residue stretch at 16–242 (LVLIHGWGMN…ASHAPFISHP (227 aa)) folds into the AB hydrolase-1 domain. Residues W22, 82–83 (SL), and 143–147 (FLALQ) contribute to the substrate site. S82 (nucleophile) is an active-site residue. Active-site residues include D207 and H235. Substrate is bound at residue H235.

This sequence belongs to the AB hydrolase superfamily. Carboxylesterase BioH family. In terms of assembly, monomer.

It localises to the cytoplasm. The catalysed reaction is 6-carboxyhexanoyl-[ACP] methyl ester + H2O = 6-carboxyhexanoyl-[ACP] + methanol + H(+). The protein operates within cofactor biosynthesis; biotin biosynthesis. Functionally, the physiological role of BioH is to remove the methyl group introduced by BioC when the pimeloyl moiety is complete. It allows to synthesize pimeloyl-ACP via the fatty acid synthetic pathway through the hydrolysis of the ester bonds of pimeloyl-ACP esters. The chain is Pimeloyl-[acyl-carrier protein] methyl ester esterase from Photobacterium profundum (strain SS9).